The sequence spans 451 residues: tRNA-2-methylthio-N(6)-dimethylallyladenosine synthase (451 aa).

The region spanning arginine 5–glycine 121 is the MTTase N-terminal domain. Residues cysteine 14, cysteine 50, cysteine 84, cysteine 156, cysteine 160, and cysteine 163 each contribute to the [4Fe-4S] cluster site. In terms of domain architecture, Radical SAM core spans arginine 142–glutamate 379. The TRAM domain maps to glutamine 382–glutamate 446.

This sequence belongs to the methylthiotransferase family. MiaB subfamily. Monomer. [4Fe-4S] cluster is required as a cofactor.

Its subcellular location is the cytoplasm. It catalyses the reaction N(6)-dimethylallyladenosine(37) in tRNA + (sulfur carrier)-SH + AH2 + 2 S-adenosyl-L-methionine = 2-methylsulfanyl-N(6)-dimethylallyladenosine(37) in tRNA + (sulfur carrier)-H + 5'-deoxyadenosine + L-methionine + A + S-adenosyl-L-homocysteine + 2 H(+). In terms of biological role, catalyzes the methylthiolation of N6-(dimethylallyl)adenosine (i(6)A), leading to the formation of 2-methylthio-N6-(dimethylallyl)adenosine (ms(2)i(6)A) at position 37 in tRNAs that read codons beginning with uridine. This Picosynechococcus sp. (strain ATCC 27264 / PCC 7002 / PR-6) (Agmenellum quadruplicatum) protein is tRNA-2-methylthio-N(6)-dimethylallyladenosine synthase.